The sequence spans 264 residues: Movement protein (264 aa).

The segment covering 210-219 has biased composition (basic residues); the sequence is FRTKPSKRGP. A disordered region spans residues 210 to 264; sequence FRTKPSKRGPKNNNNLGKGRSGGRPKPKSFDEVEKEFDNLIEDEAETSVADSDSY. The segment covering 237–247 has biased composition (basic and acidic residues); the sequence is KSFDEVEKEFD.

The protein belongs to the tobamovirus movement protein family. Binds to host RBCS at the plasmodesmata; this interaction seems required for viral systemic movement. In resistant plants, interacts with host MBP2C at host microtubules; this interaction prevents virus cell to cell movement. In resistant plants, interacts with host resistance (R) protein (e.g. tomato ToMV resistance protein TM-2(2), AC Q71BG9) at the host plasma membrane; this interaction triggers host defense responses leading to programmed cell death.

It localises to the host cytoplasm. The protein localises to the host cytoskeleton. It is found in the host cell junction. The protein resides in the host plasmodesma. Transports viral genome to neighboring plant cells directly through plasmosdesmata, without any budding. The movement protein allows efficient cell to cell propagation, by bypassing the host cell wall barrier. Forms a ribonucleoprotein complex with viral RNA. Binds microtubules and modulates microtubule stability. Can bind double-stranded DNA. Triggers host hypersensitive defense reaction in incompatible plants harboring resistance (R) proteins. This is Movement protein (MP) from Tomato mosaic virus (strain LII) (ToMV).